The following is a 548-amino-acid chain: Phosphoglucomutase (548 aa).

Ser135 (phosphoserine intermediate) is an active-site residue. Mg(2+) contacts are provided by Ser135, Asp288, Asp290, and Asp292.

Belongs to the phosphohexose mutase family. Requires Mg(2+) as cofactor.

It catalyses the reaction alpha-D-glucose 1-phosphate = alpha-D-glucose 6-phosphate. It functions in the pathway glycolipid metabolism; diglucosyl-diacylglycerol biosynthesis. Functionally, catalyzes the interconversion between glucose-6-phosphate and alpha-glucose-1-phosphate. This is the first step in the biosynthesis of diglucosyl-diacylglycerol (Glc2-DAG), i.e. a glycolipid found in the membrane, which is also used as a membrane anchor for lipoteichoic acid (LTA). This Staphylococcus haemolyticus (strain JCSC1435) protein is Phosphoglucomutase (pgcA).